Consider the following 667-residue polypeptide: Fermitin family homolog 3 (667 aa).

The residue at position 8 (serine 8) is a Phosphoserine. Phosphotyrosine is present on tyrosine 11. Positions 229-558 (WLDSSRCLMQ…SLPDFGISYV (330 aa)) constitute an FERM domain. In terms of domain architecture, PH spans 354-457 (DHLRIFRIPR…WMAGCRLASK (104 aa)). Tyrosine 504 is modified (phosphotyrosine). Position 591 is a phosphothreonine (threonine 591).

Belongs to the kindlin family. In terms of assembly, interacts with ITGB1, ITGB2 and ITGB3 (via cytoplasmic tails). Highly expressed in lymph node. Expressed in thymus, spleen and leukocytes. Weakly expressed in placenta, small intestine, stomach, testis and lung. Overexpressed in B-cell malignancies.

It is found in the cell projection. The protein resides in the podosome. Plays a central role in cell adhesion in hematopoietic cells. Acts by activating the integrin beta-1-3 (ITGB1, ITGB2 and ITGB3). Required for integrin-mediated platelet adhesion and leukocyte adhesion to endothelial cells. Required for activation of integrin beta-2 (ITGB2) in polymorphonuclear granulocytes (PMNs). Functionally, isoform 2 may act as a repressor of NF-kappa-B and apoptosis. The sequence is that of Fermitin family homolog 3 (FERMT3) from Homo sapiens (Human).